A 949-amino-acid polypeptide reads, in one-letter code: Thrombospondin-4-B (949 aa).

The N-terminal stretch at 1-22 is a signal peptide; the sequence is MAGTMHLLTAVSLILMLSSANA. One can recognise a Laminin G-like domain in the interval 23 to 198; that stretch reads ESTVYNLLTS…LEELKLAYGD (176 aa). Disulfide bonds link cysteine 276-cysteine 287, cysteine 281-cysteine 296, cysteine 299-cysteine 310, cysteine 316-cysteine 327, cysteine 321-cysteine 336, cysteine 339-cysteine 363, cysteine 369-cysteine 383, cysteine 377-cysteine 392, cysteine 395-cysteine 407, cysteine 413-cysteine 427, cysteine 421-cysteine 437, cysteine 439-cysteine 450, cysteine 466-cysteine 471, cysteine 476-cysteine 496, cysteine 512-cysteine 532, cysteine 535-cysteine 555, cysteine 571-cysteine 591, cysteine 594-cysteine 614, cysteine 632-cysteine 652, cysteine 672-cysteine 692, and cysteine 708-cysteine 929. The EGF-like 1; calcium-binding domain occupies 312–349; that stretch reads DVDECQFNPCFPGVRCVNMAPGFRCEACPLGFTGKPLE. Positions 365–408 constitute an EGF-like 2; calcium-binding domain; that stretch reads DIDECKGPDNGGCTANSICVNSVGSYQCGRCKTGFTGDQIRGCK. Positions 409–451 constitute an EGF-like 3 domain; the sequence is PEKSCGNRLQNPCDPNAQCTEERDGTITCQCGIGWAGNGYLCG. TSP type-3 repeat units follow at residues 452–484, 485–520, 521–543, 544–579, 580–602, 603–640, 641–680, and 681–716; these read KDTDIDGYPDERLRCRDPTCRKDNCVTVPNSGQ, EDADGDGKGDACDPDADGDGILNEQDNCWLTPNINQ, QNSDKDSHGDACDNCVRVDNPDQ, RDTDSDGLGDACDDDMDGDGLKNFLDNCQRVKNRDQ, LDRDGDGVGDACDSCPDIPNPNQ, SDIDNDLVGDSCDTNQDSDGDGHQDSKDNCPMVINSSQ, LDTDKDGIGDECDDDDDNDGIPDSLPPGPDNCRLVPNPEQ, and IDDNNDGVGDICESDFDQDKVIDRIDNCPENAEITL. The tract at residues 578 to 671 is disordered; the sequence is DQLDRDGDGV…PDSLPPGPDN (94 aa). Asparagine 601 and asparagine 637 each carry an N-linked (GlcNAc...) asparagine glycan. Residues 649-660 show a composition bias toward acidic residues; it reads GDECDDDDDNDG. The TSP C-terminal domain occupies 720–934; it reads RAYQTVVLDP…LKYRCNDTIP (215 aa). Residue asparagine 930 is glycosylated (N-linked (GlcNAc...) asparagine).

The protein belongs to the thrombospondin family. Homotrimer; disulfide-linked.

It localises to the endoplasmic reticulum. It is found in the sarcoplasmic reticulum. Its subcellular location is the secreted. The protein resides in the extracellular space. The protein localises to the extracellular matrix. In terms of biological role, adhesive glycoprotein that mediates cell-to-cell and cell-to-matrix interactions and may be involved in various processes including cellular proliferation, migration, adhesion and attachment. May play a role in ER stress response. This is Thrombospondin-4-B (thbs4b) from Danio rerio (Zebrafish).